Consider the following 557-residue polypeptide: Formate--tetrahydrofolate ligase (557 aa).

Residue 66 to 73 (TPAGEGKT) participates in ATP binding.

It belongs to the formate--tetrahydrofolate ligase family.

The enzyme catalyses (6S)-5,6,7,8-tetrahydrofolate + formate + ATP = (6R)-10-formyltetrahydrofolate + ADP + phosphate. It participates in one-carbon metabolism; tetrahydrofolate interconversion. This Bartonella tribocorum (strain CIP 105476 / IBS 506) protein is Formate--tetrahydrofolate ligase.